Reading from the N-terminus, the 516-residue chain is 2-isopropylmalate synthase (516 aa).

One can recognise a Pyruvate carboxyltransferase domain in the interval 5-267 (VIIFDTTLRD…TTGIKHDEIS (263 aa)). Residues Asp14, His202, His204, and Asn238 each contribute to the Mn(2+) site. Positions 392 to 516 (KLNYLSVQSG…IKQKKSVATV (125 aa)) are regulatory domain.

The protein belongs to the alpha-IPM synthase/homocitrate synthase family. LeuA type 1 subfamily. In terms of assembly, homodimer. It depends on Mn(2+) as a cofactor.

It is found in the cytoplasm. The catalysed reaction is 3-methyl-2-oxobutanoate + acetyl-CoA + H2O = (2S)-2-isopropylmalate + CoA + H(+). Its pathway is amino-acid biosynthesis; L-leucine biosynthesis; L-leucine from 3-methyl-2-oxobutanoate: step 1/4. In terms of biological role, catalyzes the condensation of the acetyl group of acetyl-CoA with 3-methyl-2-oxobutanoate (2-ketoisovalerate) to form 3-carboxy-3-hydroxy-4-methylpentanoate (2-isopropylmalate). The polypeptide is 2-isopropylmalate synthase (Vibrio cholerae serotype O1 (strain ATCC 39315 / El Tor Inaba N16961)).